The chain runs to 126 residues: uncharacterized protein (126 aa).

The protein belongs to the SufE family.

This is an uncharacterized protein from Haemophilus influenzae (strain ATCC 51907 / DSM 11121 / KW20 / Rd).